We begin with the raw amino-acid sequence, 657 residues long: Glycogen debranching enzyme (657 aa).

Aspartate 336 acts as the Nucleophile in catalysis. Residue glutamate 371 is the Proton donor of the active site. The span at 458 to 467 (NEANGEENRD) shows a compositional bias: basic and acidic residues. A disordered region spans residues 458–479 (NEANGEENRDGTNNNYSNNHGK).

The protein belongs to the glycosyl hydrolase 13 family.

It carries out the reaction Hydrolysis of (1-&gt;6)-alpha-D-glucosidic linkages to branches with degrees of polymerization of three or four glucose residues in limit dextrin.. It functions in the pathway glycan degradation; glycogen degradation. Removes maltotriose and maltotetraose chains that are attached by 1,6-alpha-linkage to the limit dextrin main chain, generating a debranched limit dextrin. This chain is Glycogen debranching enzyme, found in Escherichia coli (strain 55989 / EAEC).